Here is a 226-residue protein sequence, read N- to C-terminus: Putative DNA repair protein recA homolog 4 (226 aa).

41 to 48 (GPEASGKT) is an ATP binding site.

It belongs to the RecA family.

Its subcellular location is the cytoplasm. Involved in recombination ability and DNA strand transfer activity. The polypeptide is Putative DNA repair protein recA homolog 4 (Arabidopsis thaliana (Mouse-ear cress)).